We begin with the raw amino-acid sequence, 329 residues long: 2-oxoglutarate-dependent dioxygenase htyE (329 aa).

The Fe2OG dioxygenase domain occupies 175–289 (NTSELRLLHY…RYSVAYFGKP (115 aa)). 3 residues coordinate Fe cation: His201, Asp203, and His261. Arg280 is a 2-oxoglutarate binding site.

This sequence belongs to the iron/ascorbate-dependent oxidoreductase family. It depends on Fe(2+) as a cofactor.

It functions in the pathway antifungal biosynthesis. In terms of biological role, 2-oxoglutarate-dependent dioxygenase; part of the gene cluster that mediates the de novo generation of L-homotyrosine from acetyl-CoA and 4-hydroxyphenyl-pyruvate. L-homotyrosine is a building block of echinocandin B, a fungal lipidated cyclic hexapeptide that acts as an antifungal agent. L-homotyrosine 4-hydroxyphenyl-pyruvate first undergoes an aldol-type condensation by htyA with the C-2 of acetyl-CoA followed by the release of CoA to form 2-(4-hydroxybenzyl)-malate. This is followed by isomerization of 2-(4-hydroxy-benzyl)-malate to 3-(4-hydroxybenzyl)-malate by htyD. Thereafter, 3-(4-hydroxybenzyl)-malate undergoes decarboxylation and oxidation to form 2-oxo-4-(4-hydroxybenzyl)butanoic acid, coupled to reduction of NAD(+) to NADH by htyC. The product then undergoes transamination catalyzed by htyB to form L-homotyrosine. This chain is 2-oxoglutarate-dependent dioxygenase htyE, found in Aspergillus rugulosus (Emericella rugulosa).